A 399-amino-acid chain; its full sequence is Mannan endo-1,4-beta-mannosidase 4 (399 aa).

The first 26 residues, 1–26 (MNNSIILIFVAILIIFPNEFSKPTRA), serve as a signal peptide directing secretion. Residues Trp-88 and Asn-203 each coordinate substrate. Residue Glu-204 is the Proton donor of the active site. Tyr-279 contacts substrate. Glu-318 acts as the Nucleophile in catalysis. Cys-347 and Cys-354 form a disulfide bridge. Trp-360 is a substrate binding site.

It belongs to the glycosyl hydrolase 5 (cellulase A) family. As to expression, expressed in flowers and fruit pericarp.

It is found in the secreted. The catalysed reaction is Random hydrolysis of (1-&gt;4)-beta-D-mannosidic linkages in mannans, galactomannans and glucomannans.. Possesses endo-beta-mannanase and mannan transglycosylase activities. May be involved in cell wall degradation during fruit ripening. This Solanum lycopersicum (Tomato) protein is Mannan endo-1,4-beta-mannosidase 4 (MAN4).